The sequence spans 428 residues: Serine--tRNA ligase (428 aa).

Position 231–233 (231–233 (TAE)) interacts with L-serine. An ATP-binding site is contributed by 262-264 (RSE). E285 contributes to the L-serine binding site. 349 to 352 (EISS) contacts ATP. Residue S385 participates in L-serine binding.

This sequence belongs to the class-II aminoacyl-tRNA synthetase family. Type-1 seryl-tRNA synthetase subfamily. Homodimer. The tRNA molecule binds across the dimer.

The protein localises to the cytoplasm. The enzyme catalyses tRNA(Ser) + L-serine + ATP = L-seryl-tRNA(Ser) + AMP + diphosphate + H(+). The catalysed reaction is tRNA(Sec) + L-serine + ATP = L-seryl-tRNA(Sec) + AMP + diphosphate + H(+). It functions in the pathway aminoacyl-tRNA biosynthesis; selenocysteinyl-tRNA(Sec) biosynthesis; L-seryl-tRNA(Sec) from L-serine and tRNA(Sec): step 1/1. Functionally, catalyzes the attachment of serine to tRNA(Ser). Is also able to aminoacylate tRNA(Sec) with serine, to form the misacylated tRNA L-seryl-tRNA(Sec), which will be further converted into selenocysteinyl-tRNA(Sec). This is Serine--tRNA ligase from Staphylococcus haemolyticus (strain JCSC1435).